The following is a 635-amino-acid chain: Signal recognition particle subunit SRP72 (635 aa).

TPR repeat units follow at residues 7–42 (GGLY…YPKE), 75–105 (GHVG…DKDD), 106–139 (VKAL…HSDD), 171–204 (YSQL…CRKS), 220–253 (DSIR…NHPD), 255–290 (SVKA…DQTK), and 436–469 (VEVE…QCRL). Positions 539-635 (KRKRKIRLPK…QKKKKNASKF (97 aa)) are disordered. Basic and acidic residues predominate over residues 557–569 (DPERWLPRQERST). The segment covering 625 to 635 (KQKKKKNASKF) has biased composition (basic residues).

The protein belongs to the SRP72 family. Heterodimer with srpa-68. Srpa-68-srpa-72 heterodimer formation is stabilized by the presence of 7SL RNA. Component of a signal recognition particle (SRP) complex that consists of a 7SL RNA molecule of 300 nucleotides and six protein subunits: srpa-72, srpa-68, SRP54, F37F2.2/SRP19, F25G6.8/SRP14 and ZK512.4/SRP9. Within the SRP complex, interacts (via N-terminus) with srpa-68 (via C-terminus).

It localises to the cytoplasm. Its subcellular location is the endoplasmic reticulum. In terms of biological role, component of the signal recognition particle (SRP) complex, a ribonucleoprotein complex that mediates the cotranslational targeting of secretory and membrane proteins to the endoplasmic reticulum (ER). The SRP complex interacts with the signal sequence in nascent secretory and membrane proteins and directs them to the membrane of the ER. The SRP complex targets the ribosome-nascent chain complex to the SRP receptor (SR), which is anchored in the ER, where SR compaction and GTPase rearrangement drive cotranslational protein translocation into the ER. Binds the signal recognition particle RNA (7SL RNA) in presence of srpa-68. Can bind 7SL RNA with low affinity. The SRP complex possibly participates in the elongation arrest function. In Caenorhabditis elegans, this protein is Signal recognition particle subunit SRP72.